The chain runs to 856 residues: Leucine--tRNA ligase (856 aa).

A 'HIGH' region motif is present at residues 53–63 (PYPSGNLHMGH). The 'KMSKS' region signature appears at 622 to 626 (KMSKS). Residue lysine 625 coordinates ATP.

The protein belongs to the class-I aminoacyl-tRNA synthetase family.

It localises to the cytoplasm. The catalysed reaction is tRNA(Leu) + L-leucine + ATP = L-leucyl-tRNA(Leu) + AMP + diphosphate. This chain is Leucine--tRNA ligase, found in Prochlorococcus marinus (strain MIT 9215).